Reading from the N-terminus, the 98-residue chain is Small ribosomal subunit protein bS20 (98 aa).

This sequence belongs to the bacterial ribosomal protein bS20 family.

In terms of biological role, binds directly to 16S ribosomal RNA. The protein is Small ribosomal subunit protein bS20 of Parasynechococcus marenigrum (strain WH8102).